Consider the following 680-residue polypeptide: UvrABC system protein B (680 aa).

The region spanning 27 to 192 is the Helicase ATP-binding domain; the sequence is SNIEAGVTDQ…ERNDYDFHRG (166 aa). 40 to 47 is an ATP binding site; sequence GVTGSGKT. The Beta-hairpin signature appears at 93–116; that stretch reads YYDYYQPEAYVPSSDTYIEKDSSI. The region spanning 432-594 is the Helicase C-terminal domain; it reads QVDDLLGECR…IVPATIRKAV (163 aa). In terms of domain architecture, UVR spans 637 to 672; it reads AKQIQQLERDMREAAKELEFERAAELRDRIRLLREH.

This sequence belongs to the UvrB family. In terms of assembly, forms a heterotetramer with UvrA during the search for lesions. Interacts with UvrC in an incision complex.

It localises to the cytoplasm. In terms of biological role, the UvrABC repair system catalyzes the recognition and processing of DNA lesions. A damage recognition complex composed of 2 UvrA and 2 UvrB subunits scans DNA for abnormalities. Upon binding of the UvrA(2)B(2) complex to a putative damaged site, the DNA wraps around one UvrB monomer. DNA wrap is dependent on ATP binding by UvrB and probably causes local melting of the DNA helix, facilitating insertion of UvrB beta-hairpin between the DNA strands. Then UvrB probes one DNA strand for the presence of a lesion. If a lesion is found the UvrA subunits dissociate and the UvrB-DNA preincision complex is formed. This complex is subsequently bound by UvrC and the second UvrB is released. If no lesion is found, the DNA wraps around the other UvrB subunit that will check the other stand for damage. The protein is UvrABC system protein B of Nitratidesulfovibrio vulgaris (strain DSM 19637 / Miyazaki F) (Desulfovibrio vulgaris).